The chain runs to 216 residues: Urease accessory protein UreG (216 aa).

25–32 (GPVGSGKT) lines the GTP pocket.

This sequence belongs to the SIMIBI class G3E GTPase family. UreG subfamily. As to quaternary structure, homodimer. UreD, UreF and UreG form a complex that acts as a GTP-hydrolysis-dependent molecular chaperone, activating the urease apoprotein by helping to assemble the nickel containing metallocenter of UreC. The UreE protein probably delivers the nickel.

Its subcellular location is the cytoplasm. Functionally, facilitates the functional incorporation of the urease nickel metallocenter. This process requires GTP hydrolysis, probably effectuated by UreG. This is Urease accessory protein UreG from Burkholderia thailandensis (strain ATCC 700388 / DSM 13276 / CCUG 48851 / CIP 106301 / E264).